The chain runs to 213 residues: MKAFTQHHGLVAPLDRANVDTDQIIPKQFLKSIKRTGFGPNLFDEWRYLDVGQPYQDNSKRPLNPDFVLNHERYQGASVLLARENFGCGSSREHAPWALEEYGFCAIIAPSYADIFFNNSFKNGLLPIILSEEDVDQLFKQVEASPGYQLSIDLQAQTVTRPDGKVLSFEIDAFRKHCLLNGLDDIGLTLMDAEAIAGFESRHRASQPWLFRD.

The protein belongs to the LeuD family. LeuD type 1 subfamily. As to quaternary structure, heterodimer of LeuC and LeuD.

It catalyses the reaction (2R,3S)-3-isopropylmalate = (2S)-2-isopropylmalate. It participates in amino-acid biosynthesis; L-leucine biosynthesis; L-leucine from 3-methyl-2-oxobutanoate: step 2/4. In terms of biological role, catalyzes the isomerization between 2-isopropylmalate and 3-isopropylmalate, via the formation of 2-isopropylmaleate. The sequence is that of 3-isopropylmalate dehydratase small subunit from Pseudomonas syringae pv. syringae (strain B728a).